The primary structure comprises 239 residues: Pyrroloquinoline-quinone synthase (239 aa).

It belongs to the PqqC family.

The catalysed reaction is 6-(2-amino-2-carboxyethyl)-7,8-dioxo-1,2,3,4,7,8-hexahydroquinoline-2,4-dicarboxylate + 3 O2 = pyrroloquinoline quinone + 2 H2O2 + 2 H2O + H(+). Its pathway is cofactor biosynthesis; pyrroloquinoline quinone biosynthesis. Ring cyclization and eight-electron oxidation of 3a-(2-amino-2-carboxyethyl)-4,5-dioxo-4,5,6,7,8,9-hexahydroquinoline-7,9-dicarboxylic-acid to PQQ. In Gluconobacter oxydans (strain 621H) (Gluconobacter suboxydans), this protein is Pyrroloquinoline-quinone synthase.